The chain runs to 386 residues: Heavy metal-associated isoprenylated plant protein 5 (386 aa).

A compositionally biased stretch (basic and acidic residues) spans 1–16; sequence MGEVQEGPKVEQEKKP. Positions 1 to 40 are disordered; it reads MGEVQEGPKVEQEKKPAATVVPVETTDGKPKSGGGDSAAA. Residues 49–112 enclose the HMA 1 domain; sequence VSAFVYKVDM…KLEEKTKRKV (64 aa). A metal cation contacts are provided by cysteine 60 and cysteine 63. A disordered region spans residues 129 to 153; that stretch reads VGEKKADGGDKEAAPPAPAPAAPKE. A compositionally biased stretch (basic and acidic residues) spans 130-141; the sequence is GEKKADGGDKEA. One can recognise an HMA 2 domain in the interval 153–220; sequence ESVVPLKIRL…KLKRTVEPLV (68 aa). 2 residues coordinate a metal cation: cysteine 164 and cysteine 167. 2 stretches are compositionally biased toward basic and acidic residues: residues 223-245 and 252-297; these read KKDD…KKEA and EAKK…KKDG. The disordered stretch occupies residues 223 to 301; the sequence is KKDDGAAENK…EKKKDGGGVP (79 aa). Cysteine 383 is subject to Cysteine methyl ester. A lipid anchor (S-farnesyl cysteine) is attached at cysteine 383. Positions 384-386 are cleaved as a propeptide — removed in mature form; it reads SVM.

This sequence belongs to the HIPP family. In terms of processing, efficiently farnesylated in vitro.

Heavy-metal-binding protein. Involved in disease resistance. The protein is Heavy metal-associated isoprenylated plant protein 5 of Arabidopsis thaliana (Mouse-ear cress).